The following is a 146-amino-acid chain: MGSLPVRIKRLRATPLPAYMTEHAAGVDLCASLSADFVLAPGERALVPTGLAIELPPGFEAQVRPRSGLALRHGIALVNSPGTIDADYRGEIGVILINLGSEPFTVSDGERIAQMVFARCERAEFIEVDELGDTARGAGGFGHTGR.

Substrate contacts are provided by residues 66–68 (RSG), Asn79, and 83–85 (TID).

It belongs to the dUTPase family. The cofactor is Mg(2+).

It catalyses the reaction dUTP + H2O = dUMP + diphosphate + H(+). It participates in pyrimidine metabolism; dUMP biosynthesis; dUMP from dCTP (dUTP route): step 2/2. In terms of biological role, this enzyme is involved in nucleotide metabolism: it produces dUMP, the immediate precursor of thymidine nucleotides and it decreases the intracellular concentration of dUTP so that uracil cannot be incorporated into DNA. The chain is Deoxyuridine 5'-triphosphate nucleotidohydrolase from Citrifermentans bemidjiense (strain ATCC BAA-1014 / DSM 16622 / JCM 12645 / Bem) (Geobacter bemidjiensis).